Consider the following 236-residue polypeptide: Ribosomal RNA large subunit methyltransferase E (236 aa).

S-adenosyl-L-methionine contacts are provided by glycine 76, tryptophan 78, aspartate 99, aspartate 115, and aspartate 140. The active-site Proton acceptor is lysine 180.

The protein belongs to the class I-like SAM-binding methyltransferase superfamily. RNA methyltransferase RlmE family.

The protein localises to the cytoplasm. It catalyses the reaction uridine(2552) in 23S rRNA + S-adenosyl-L-methionine = 2'-O-methyluridine(2552) in 23S rRNA + S-adenosyl-L-homocysteine + H(+). Its function is as follows. Specifically methylates the uridine in position 2552 of 23S rRNA at the 2'-O position of the ribose in the fully assembled 50S ribosomal subunit. This chain is Ribosomal RNA large subunit methyltransferase E, found in Rhodopseudomonas palustris (strain HaA2).